A 281-amino-acid polypeptide reads, in one-letter code: 2-hydroxymuconate semialdehyde hydrolase (281 aa).

The interval 30 to 55 is disordered; the sequence is FPALLIHGSGPASPPGPTGAGSFRSS. One can recognise an AB hydrolase-1 domain in the interval 31-261; sequence PALLIHGSGP…QCGHWTQIEH (231 aa). Active-site residues include serine 106, aspartate 227, and histidine 255.

It belongs to the DmpD/TodF/XylF esterase family.

The enzyme catalyses (2Z,4E)-2-hydroxy-6-oxohexa-2,4-dienoate + H2O = 2-oxopent-4-enoate + formate + H(+). It participates in aromatic compound metabolism; benzoate degradation via hydroxylation. In terms of biological role, catalyzes the conversion of 2-hydroxymuconate semialdehyde to 2-hydroxypent-2,4-dienoate. This Pseudomonas putida (Arthrobacter siderocapsulatus) protein is 2-hydroxymuconate semialdehyde hydrolase (xylF).